A 151-amino-acid chain; its full sequence is Large ribosomal subunit protein bL9 (151 aa).

This sequence belongs to the bacterial ribosomal protein bL9 family.

In terms of biological role, binds to the 23S rRNA. This is Large ribosomal subunit protein bL9 from Rhodococcus erythropolis (strain PR4 / NBRC 100887).